Consider the following 411-residue polypeptide: Trigger factor (411 aa).

In terms of domain architecture, PPIase FKBP-type spans 162–240 (EDLVVIDYTT…IKEVKRRQNI (79 aa)).

It belongs to the FKBP-type PPIase family. Tig subfamily.

The protein resides in the cytoplasm. The enzyme catalyses [protein]-peptidylproline (omega=180) = [protein]-peptidylproline (omega=0). In terms of biological role, involved in protein export. Acts as a chaperone by maintaining the newly synthesized protein in an open conformation. Functions as a peptidyl-prolyl cis-trans isomerase. The protein is Trigger factor of Thermodesulfovibrio yellowstonii (strain ATCC 51303 / DSM 11347 / YP87).